We begin with the raw amino-acid sequence, 478 residues long: Lipoprotein lipase (478 aa).

The N-terminal stretch at 1 to 27 (MESKVLLLLALSVWLQSLTVSRGGLVA) is a signal peptide. Residues 35-56 (KDFRDIESKFALRTPEDTAEDT) form an interaction with GPIHBP1 region. Cys-57 and Cys-70 form a disulfide bridge. A glycan (N-linked (GlcNAc...) asparagine) is linked at Asn-73. Tyr-124 is modified (3'-nitrotyrosine). Ser-162 serves as the catalytic Nucleophile. The Charge relay system role is filled by Asp-186. Tyr-194 is modified (3'-nitrotyrosine). Ca(2+)-binding residues include Ala-197, Arg-200, Ser-202, and Asp-205. An intrachain disulfide couples Cys-246 to Cys-269. The segment at 246-269 (CNIGEALRVIAERGLGDVDQLVKC) is essential for determining substrate specificity. The active-site Charge relay system is the His-271. 2 disulfide bridges follow: Cys-294/Cys-313 and Cys-305/Cys-308. The PLAT domain maps to 344-467 (FHYQVKIHFS…KGKSPVIFVK (124 aa)). Tyr-346 carries the 3'-nitrotyrosine modification. N-linked (GlcNAc...) asparagine glycosylation is present at Asn-389. Residues 420-424 (WSNWW) are important for interaction with lipoprotein particles. Residues 433–437 (KIRVK) form an important for heparin binding region. The interaction with GPIHBP1 stretch occupies residues 446-470 (IFCSREKMSYLQKGKSPVIFVKCHD). The cysteines at positions 448 and 468 are disulfide-linked.

It belongs to the AB hydrolase superfamily. Lipase family. As to quaternary structure, homodimer. Interacts with GPIHBP1 with 1:1 stoichiometry. Interacts with APOC2; the interaction activates LPL activity in the presence of lipids. Interaction with heparan sulfate proteoglycans is required to protect LPL against loss of activity. Associates with lipoprotein particles in blood plasma. Interacts with LMF1 and SEL1L; interaction with SEL1L is required to prevent aggregation of newly synthesized LPL in the endoplasmic reticulum (ER), and for normal export of LPL from the ER to the extracellular space. Interacts with SORL1; SORL1 acts as a sorting receptor, promoting LPL localization to endosomes and later to lysosomes, leading to degradation of newly synthesized LPL. In terms of processing, tyrosine nitration after lipopolysaccharide (LPS) challenge down-regulates the lipase activity.

It localises to the cell membrane. It is found in the secreted. The protein localises to the extracellular space. The protein resides in the extracellular matrix. The catalysed reaction is a triacylglycerol + H2O = a diacylglycerol + a fatty acid + H(+). It catalyses the reaction a 1,2-diacyl-sn-glycero-3-phosphocholine + H2O = a 2-acyl-sn-glycero-3-phosphocholine + a fatty acid + H(+). The enzyme catalyses 1,2,3-tri-(9Z-octadecenoyl)-glycerol + H2O = di-(9Z)-octadecenoylglycerol + (9Z)-octadecenoate + H(+). It carries out the reaction 1,2-di-(9Z-octadecenoyl)-sn-glycero-3-phosphocholine + H2O = (9Z-octadecenoyl)-sn-glycero-3-phosphocholine + (9Z)-octadecenoate + H(+). The catalysed reaction is 1,2,3-tributanoylglycerol + H2O = dibutanoylglycerol + butanoate + H(+). It catalyses the reaction 1,2-dihexadecanoyl-sn-glycero-3-phosphocholine + H2O = hexadecanoyl-sn-glycero-3-phosphocholine + hexadecanoate + H(+). With respect to regulation, the apolipoprotein APOC2 acts as a coactivator of LPL activity. Ca(2+) binding promotes protein stability and formation of the active homodimer. Interaction with GPIHBP1 protects LPL against inactivation by ANGPTL4. Functionally, key enzyme in triglyceride metabolism. Catalyzes the hydrolysis of triglycerides from circulating chylomicrons and very low density lipoproteins (VLDL), and thereby plays an important role in lipid clearance from the blood stream, lipid utilization and storage. Although it has both phospholipase and triglyceride lipase activities it is primarily a triglyceride lipase with low but detectable phospholipase activity. Mediates margination of triglyceride-rich lipoprotein particles in capillaries. Recruited to its site of action on the luminal surface of vascular endothelium by binding to GPIHBP1 and cell surface heparan sulfate proteoglycans. The polypeptide is Lipoprotein lipase (LPL) (Ovis aries (Sheep)).